Here is a 132-residue protein sequence, read N- to C-terminus: uncharacterized protein (132 aa).

A helical membrane pass occupies residues 105–125 (VHGYVVFWLSILCILIIIFVY).

The protein localises to the membrane. This is an uncharacterized protein from Methanocaldococcus jannaschii (strain ATCC 43067 / DSM 2661 / JAL-1 / JCM 10045 / NBRC 100440) (Methanococcus jannaschii).